We begin with the raw amino-acid sequence, 582 residues long: Leucine-rich repeat protein SHOC-2 (582 aa).

Basic and acidic residues-rich tracts occupy residues 1–29 (MSSS…KEAK) and 36–57 (KESK…KKDS). Residues 1-88 (MSSSLGKEKD…PGTRKKSSNA (88 aa)) form a disordered region. Positions 63–66 (GVAF) match the RVxF motif; important for interaction with PP1c motif. LRR repeat units lie at residues 101–122 (NSMR…IKEL), 124–145 (QLTE…VGCL), 147–169 (NLMT…DNLK), 170–191 (KLRM…VYRL), 193–214 (SLTT…IKNL), 216–237 (KLSM…IGEL), 239–260 (NLIT…IGNC), 262–283 (QITN…IGNL), 285–307 (SLSR…AKCS), 308–329 (ALEE…LLSS), 332–353 (KLNS…GPSQ), 356–377 (TIYS…IFSR), 380–400 (VLSK…DFGT), 403–424 (SMVE…VSGL), 426–448 (SLEV…GNLR), 449–470 (KLRE…IAYL), 472–494 (DLQK…GHLT), 495–516 (NLTH…IGTL), 518–540 (NLEE…LALC), and 542–563 (KLSI…IVAG).

It belongs to the SHOC2 family. In terms of assembly, component of the SHOC2-MRAS-PP1c (SMP) complex consisting of SHOC2, GTP-bound M-Ras/MRAS and the catalytic subunit of protein phosphatase 1 (either PPP1CA, PPP1CB or PPP1CC). SHOC2 and PP1c preferably bind M-Ras/MRAS, but they also bind K-Ras/KRAS, N-Ras/NRAS and H-Ras/HRAS; these interactions are GTP-dependent and both SHOC2 and PP1c are required to form a stable complex. Interacts with PP1c in the absence of Ras GTPases. Interacts with M-Ras/MRAS and RAF1. Interacts with ERBIN; disrupts the interaction with RAF1 and Ras, preventing the activation of the Ras signaling pathway. Interacts with LZTR1.

The protein localises to the cytoplasm. It localises to the nucleus. Functionally, core component of the SHOC2-MRAS-PP1c (SMP) holophosphatase complex that regulates activation of the MAPK pathway. Acts as a scaffolding protein in the SMP complex. The SMP complex specifically dephosphorylates the inhibitory phosphorylation at 'Ser-259' of RAF1 kinase, 'Ser-365' of BRAF kinase and 'Ser-214' of ARAF kinase, stimulating their kinase activities. The SMP complex enhances the dephosphorylation activity and substrate specificity of PP1c. The protein is Leucine-rich repeat protein SHOC-2 (SHOC2) of Homo sapiens (Human).